We begin with the raw amino-acid sequence, 152 residues long: Large ribosomal subunit protein uL30 (152 aa).

This sequence belongs to the universal ribosomal protein uL30 family. As to quaternary structure, part of the 50S ribosomal subunit.

The chain is Large ribosomal subunit protein uL30 from Methanosphaera stadtmanae (strain ATCC 43021 / DSM 3091 / JCM 11832 / MCB-3).